We begin with the raw amino-acid sequence, 478 residues long: Stromelysin-1 (478 aa).

The signal sequence occupies residues 1–17; sequence MQNLPALLLFCGVVCSA. Residues 18-99 constitute a propeptide, activation peptide; that stretch reads YPVDRAAEDE…PRCGVPDVGD (82 aa). Residues 90-97 carry the Cysteine switch motif; sequence PRCGVPDV. Cys-92 contributes to the Zn(2+) binding site. The Ca(2+) site is built by Asp-124 and Asp-158. His-168 and Asp-170 together coordinate Zn(2+). Ca(2+) is bound by residues Asp-175, Gly-176, Gly-178, and Val-180. Residue His-183 participates in Zn(2+) binding. Ca(2+) contacts are provided by Gly-190 and Asp-194. His-196 contacts Zn(2+). Ca(2+) is bound by residues Asp-198, Asp-199, and Glu-201. His-218 serves as a coordination point for Zn(2+). Residue Glu-219 is part of the active site. His-222 and His-228 together coordinate Zn(2+). The interval 260 to 286 is disordered; sequence QSLYGGPPSDSSNDPVVPTESVPPGPG. Residues 266–277 are compositionally biased toward low complexity; the sequence is PPSDSSNDPVVP. Hemopexin repeat units lie at residues 288–337, 338–384, 386–434, and 435–478; these read PAAC…WPSL, PSGL…GFPP, VKKI…FPGV, and DSKV…WLNC. Residues Cys-291 and Cys-478 are joined by a disulfide bond. A Ca(2+)-binding site is contributed by Asp-298. Residues Asp-390 and Asp-439 each contribute to the Ca(2+) site. A glycan (N-linked (GlcNAc...) asparagine) is linked at Asn-452.

This sequence belongs to the peptidase M10A family. Ca(2+) is required as a cofactor. The cofactor is Zn(2+).

It is found in the secreted. The protein resides in the extracellular space. It localises to the extracellular matrix. It catalyses the reaction Preferential cleavage where P1', P2' and P3' are hydrophobic residues.. In terms of biological role, metalloproteinase with a rather broad substrate specificity that can degrade fibronectin, laminin, gelatins of type I, III, IV, and V; collagens III, IV, X, and IX, and cartilage proteoglycans. Activates different molecules including growth factors, plasminogen or other matrix metalloproteinases such as MMP9. Once released into the extracellular matrix (ECM), the inactive pro-enzyme is activated by the plasmin cascade signaling pathway. Also acts intracellularly. For example, in dopaminergic neurons, gets activated by the serine protease HTRA2 upon stress and plays a pivotal role in DA neuronal degeneration by mediating microglial activation and alpha-synuclein/SNCA cleavage. In addition, plays a role in immune response and possesses antiviral activity against various viruses. Mechanistically, translocates from the cytoplasm into the cell nucleus upon virus infection to influence NF-kappa-B activities. This is Stromelysin-1 (MMP3) from Canis lupus familiaris (Dog).